We begin with the raw amino-acid sequence, 264 residues long: Spermidine/putrescine transport system permease protein PotC (264 aa).

Residues 1 to 7 (MIGRLLR) lie on the Cytoplasmic side of the membrane. The helical transmembrane segment at 8–27 (GGFMTAIYAYLYIPIIILIV) threads the bilayer. At 28–65 (NSFNSSRFGINWQGFTTKWYSLLMNNDSLLQAAQHSLT) the chain is on the periplasmic side. The ABC transmembrane type-1 domain occupies 60–248 (AQHSLTMAVF…VLSLVMVIAS (189 aa)). Residues 66–85 (MAVFSATFATLIGSLTAVAL) form a helical membrane-spanning segment. The Cytoplasmic portion of the chain corresponds to 86 to 100 (YRYRFRGKPFVSGML). Residues 101-120 (FVVMMSPDIVMAISLLVLFM) form a helical membrane-spanning segment. Over 121–128 (LLGIQLGF) the chain is Periplasmic. The helical transmembrane segment at 129–148 (WSLLFSHITFCLPFVVVTVY) threads the bilayer. Residues 149–176 (SRLKGFDVRMLEAAKDLGASEFTILRKI) are Cytoplasmic-facing. Residues 177 to 196 (ILPLAMPAVAAGWVLSFTLS) traverse the membrane as a helical segment. At 197–231 (MDDVVVSSFVTGPSYEILPLKIYSMVKVGVSPEVN) the chain is on the periplasmic side. The chain crosses the membrane as a helical span at residues 232–251 (ALATILLVLSLVMVIASQLI). Over 252 to 264 (ARDKTKGNTGDVK) the chain is Cytoplasmic.

The protein belongs to the binding-protein-dependent transport system permease family. CysTW subfamily.

It localises to the cell inner membrane. Required for the activity of the bacterial periplasmic transport system of putrescine and spermidine. The polypeptide is Spermidine/putrescine transport system permease protein PotC (potC) (Escherichia coli O157:H7).